Consider the following 391-residue polypeptide: Somatostatin receptor type 1 (391 aa).

Over residues 1–11 (MFPNGTASSPS) the composition is skewed to low complexity. Residues 1–49 (MFPNGTASSPSSPSPSPGSCGEGGGSRGPGAGAADGMEEPGRNASQNGT) are disordered. Topologically, residues 1 to 55 (MFPNGTASSPSSPSPSPGSCGEGGGSRGPGAGAADGMEEPGRNASQNGTLSEGQG) are extracellular. Asparagine 4 carries an N-linked (GlcNAc...) asparagine glycan. Gly residues predominate over residues 20–33 (CGEGGGSRGPGAGA). N-linked (GlcNAc...) asparagine glycosylation is found at asparagine 43 and asparagine 47. Residues 56 to 83 (SAILISFIYSVVCLVGLCGNSMVIYVIL) traverse the membrane as a helical segment. The Cytoplasmic segment spans residues 84–93 (RYAKMKTATN). Residues 94-119 (IYILNLAIADELLMLSVPFLVTSTLL) traverse the membrane as a helical segment. Residues 120–130 (RHWPFGALLCR) lie on the Extracellular side of the membrane. Cysteines 129 and 207 form a disulfide. The chain crosses the membrane as a helical span at residues 131-152 (LVLSVDAVNMFTSIYCLTVLSV). The Cytoplasmic segment spans residues 153 to 174 (DRYVAVVHPIKAARYRRPTVAK). The chain crosses the membrane as a helical span at residues 175–195 (VVNLGVWVLSLLVILPIVVFS). The Extracellular portion of the chain corresponds to 196–218 (RTAANSDGTVACNMLMPEPAQRW). The helical transmembrane segment at 219-243 (LVGFVLYTFLMGFLLPVGAICLCYV) threads the bilayer. Residues 244 to 269 (LIIAKMRMVALKAGWQQRKRSERKIT) are Cytoplasmic-facing. The helical transmembrane segment at 270–295 (LMVMMVVMVFVICWMPFYVVQLVNVF) threads the bilayer. Residues 296–302 (AEQDDAT) lie on the Extracellular side of the membrane. The helical transmembrane segment at 303-326 (VSQLSVILGYANSCANPILYGFLS) threads the bilayer. The Cytoplasmic segment spans residues 327 to 391 (DNFKRSFQRI…GTCTSRITTL (65 aa)). The S-palmitoyl cysteine moiety is linked to residue cysteine 338.

Belongs to the G-protein coupled receptor 1 family. In terms of assembly, interacts with SKB1.

It localises to the cell membrane. Its function is as follows. Receptor for somatostatin with higher affinity for somatostatin-14 than -28. This receptor is coupled via pertussis toxin sensitive G proteins to inhibition of adenylyl cyclase. In addition it stimulates phosphotyrosine phosphatase and Na(+)/H(+) exchanger via pertussis toxin insensitive G proteins. The protein is Somatostatin receptor type 1 (SSTR1) of Canis lupus familiaris (Dog).